Consider the following 167-residue polypeptide: Large ribosomal subunit protein uL10 (167 aa).

This sequence belongs to the universal ribosomal protein uL10 family. Part of the ribosomal stalk of the 50S ribosomal subunit. The N-terminus interacts with L11 and the large rRNA to form the base of the stalk. The C-terminus forms an elongated spine to which L12 dimers bind in a sequential fashion forming a multimeric L10(L12)X complex.

Forms part of the ribosomal stalk, playing a central role in the interaction of the ribosome with GTP-bound translation factors. The chain is Large ribosomal subunit protein uL10 from Tolumonas auensis (strain DSM 9187 / NBRC 110442 / TA 4).